Consider the following 59-residue polypeptide: Large ribosomal subunit protein bL32 (59 aa).

The segment at 1 to 59 is disordered; that stretch reads MAVQQNRKTRSKRGMRRSHDALSAAALSTDATTGEVHRRHHVSPDGFYRGKQVVEARDE. Positions 7–16 are enriched in basic residues; sequence RKTRSKRGMR. The span at 21–33 shows a compositional bias: low complexity; the sequence is ALSAAALSTDATT.

Belongs to the bacterial ribosomal protein bL32 family.

The chain is Large ribosomal subunit protein bL32 from Marinobacter nauticus (strain ATCC 700491 / DSM 11845 / VT8) (Marinobacter aquaeolei).